Here is a 141-residue protein sequence, read N- to C-terminus: Large ribosomal subunit protein uL22 (141 aa).

A disordered region spans residues 110-141; it reads EEKKTVAKKTTTTKAPAKKTTSTKKATAKKES. Over residues 117 to 134 the composition is skewed to low complexity; it reads KKTTTTKAPAKKTTSTKK.

Belongs to the universal ribosomal protein uL22 family. Part of the 50S ribosomal subunit.

In terms of biological role, this protein binds specifically to 23S rRNA; its binding is stimulated by other ribosomal proteins, e.g. L4, L17, and L20. It is important during the early stages of 50S assembly. It makes multiple contacts with different domains of the 23S rRNA in the assembled 50S subunit and ribosome. The globular domain of the protein is located near the polypeptide exit tunnel on the outside of the subunit, while an extended beta-hairpin is found that lines the wall of the exit tunnel in the center of the 70S ribosome. This Campylobacter jejuni subsp. doylei (strain ATCC BAA-1458 / RM4099 / 269.97) protein is Large ribosomal subunit protein uL22.